The following is an 830-amino-acid chain: Ribosome biogenesis protein ERB1 (830 aa).

Residues 1–142 are disordered; it reads MAPQPLKVGT…NKDLPVDEKL (142 aa). Acidic residues-rich tracts occupy residues 35-44 and 52-109; these read VSEESDEEFG and MSDD…DSDS. The segment covering 131–142 has biased composition (basic and acidic residues); it reads EENKDLPVDEKL. 6 WD repeats span residues 481-520, 523-563, 660-698, 701-740, 744-783, and 799-830; these read PGDTRVRSVSTSPDGQWIASGSEDGVVRVWDLGNGREVWR, LHAG…APHI, KTPGTIQRVAFHPSKPHFFAATQRYIRLYDLAAQKLIRT, SGVKWISSMDVHSGGDNLIIGSYDKKLAWFDMDLSAKPYK, YHNRALRSVAYHPTLPLFASASDDGTVHIFHCTVYTDLMQ, and IDGIGVLDLRWVPGKPWLVSSGADGEVRLWCS.

The protein belongs to the WD repeat BOP1/ERB1 family. As to quaternary structure, component of the NOP7 complex, composed of ERB1, NOP7 and YTM1. The complex is held together by ERB1, which interacts with NOP7 via its N-terminal domain and with YTM1 via a high-affinity interaction between the seven-bladed beta-propeller domains of the 2 proteins. The NOP7 complex associates with the 66S pre-ribosome.

It localises to the nucleus. The protein resides in the nucleolus. Its subcellular location is the nucleoplasm. Component of the NOP7 complex, which is required for maturation of the 25S and 5.8S ribosomal RNAs and formation of the 60S ribosome. This is Ribosome biogenesis protein ERB1 from Cryptococcus neoformans var. neoformans serotype D (strain JEC21 / ATCC MYA-565) (Filobasidiella neoformans).